The following is a 147-amino-acid chain: MKVILLQDVKKIGKKGEVIEASDGYARNFLFPRKLAQEATDSNMHILNNKKENERKKKLAEIEAAQKLAGELKGKEITIKTKIGESGKLFGAITSKDIASLIKTQYNVEIDKKKIVMDTIKLAGNYDIEVKLYPEVSTKMKVNILPQ.

The protein belongs to the bacterial ribosomal protein bL9 family.

Binds to the 23S rRNA. The chain is Large ribosomal subunit protein bL9 from Clostridium botulinum (strain Alaska E43 / Type E3).